We begin with the raw amino-acid sequence, 345 residues long: Biotin synthase (345 aa).

The Radical SAM core domain occupies 38–256 (RQVQVSTLLS…IAVARIMMPA (219 aa)). The [4Fe-4S] cluster site is built by cysteine 53, cysteine 57, and cysteine 60. Residues cysteine 97, cysteine 128, cysteine 188, and arginine 260 each contribute to the [2Fe-2S] cluster site.

This sequence belongs to the radical SAM superfamily. Biotin synthase family. Homodimer. It depends on [4Fe-4S] cluster as a cofactor. The cofactor is [2Fe-2S] cluster.

It catalyses the reaction (4R,5S)-dethiobiotin + (sulfur carrier)-SH + 2 reduced [2Fe-2S]-[ferredoxin] + 2 S-adenosyl-L-methionine = (sulfur carrier)-H + biotin + 2 5'-deoxyadenosine + 2 L-methionine + 2 oxidized [2Fe-2S]-[ferredoxin]. It participates in cofactor biosynthesis; biotin biosynthesis; biotin from 7,8-diaminononanoate: step 2/2. In terms of biological role, catalyzes the conversion of dethiobiotin (DTB) to biotin by the insertion of a sulfur atom into dethiobiotin via a radical-based mechanism. The chain is Biotin synthase from Pectobacterium atrosepticum (strain SCRI 1043 / ATCC BAA-672) (Erwinia carotovora subsp. atroseptica).